The sequence spans 249 residues: Exosome complex component Rrp41 (249 aa).

The protein belongs to the RNase PH family. Rrp41 subfamily. Component of the archaeal exosome complex. Forms a hexameric ring-like arrangement composed of 3 Rrp41-Rrp42 heterodimers. The hexameric ring associates with a trimer of Rrp4 and/or Csl4 subunits.

Its subcellular location is the cytoplasm. Its function is as follows. Catalytic component of the exosome, which is a complex involved in RNA degradation. Has 3'-&gt;5' exoribonuclease activity. Can also synthesize heteromeric RNA-tails. In Thermococcus onnurineus (strain NA1), this protein is Exosome complex component Rrp41.